The sequence spans 243 residues: 1-(5-phosphoribosyl)-5-[(5-phosphoribosylamino)methylideneamino] imidazole-4-carboxamide isomerase (243 aa).

Asp10 functions as the Proton acceptor in the catalytic mechanism. The Proton donor role is filled by Asp128.

It belongs to the HisA/HisF family.

It is found in the cytoplasm. It catalyses the reaction 1-(5-phospho-beta-D-ribosyl)-5-[(5-phospho-beta-D-ribosylamino)methylideneamino]imidazole-4-carboxamide = 5-[(5-phospho-1-deoxy-D-ribulos-1-ylimino)methylamino]-1-(5-phospho-beta-D-ribosyl)imidazole-4-carboxamide. The protein operates within amino-acid biosynthesis; L-histidine biosynthesis; L-histidine from 5-phospho-alpha-D-ribose 1-diphosphate: step 4/9. The sequence is that of 1-(5-phosphoribosyl)-5-[(5-phosphoribosylamino)methylideneamino] imidazole-4-carboxamide isomerase from Helicobacter hepaticus (strain ATCC 51449 / 3B1).